Here is a 335-residue protein sequence, read N- to C-terminus: Zinc transporter ZIP11 (335 aa).

7 helical membrane-spanning segments follow: residues 12–32, 44–64, 72–92, 187–207, 256–278, 283–300, and 315–335; these read LLGTFFTWAMTAAGAALVFIF, LGFAAGVMLAASYWSLLAPAV, GFGAFAFFPVAVGFTLGAAFV, IALLILAITIHNIPEGLAVGV, FWYGQLSGMVEPLAGVFGAFAVV, VLPYALAFAAGAMVYVVM, and LASWASILGFVVMMSLDVGLG.

The protein belongs to the ZIP transporter (TC 2.A.5) family.

The protein localises to the cell membrane. It is found in the nucleus. It localises to the cytoplasm. The protein resides in the golgi apparatus. The enzyme catalyses Zn(2+)(in) = Zn(2+)(out). It carries out the reaction Cu(2+)(in) = Cu(2+)(out). Its function is as follows. Zinc importer that regulates cytosolic zinc concentrations either via zinc influx from the extracellular compartment or efflux from intracellular organelles such as Golgi apparatus. May transport copper ions as well. The transport mechanism remains to be elucidated. This chain is Zinc transporter ZIP11 (Slc39a11), found in Rattus norvegicus (Rat).